The following is a 610-amino-acid chain: UvrABC system protein C (610 aa).

A GIY-YIG domain is found at 16 to 94; sequence SAPGVYRMYD…IKQYMPKYNV (79 aa). The UVR domain maps to 203 to 238; it reads KQVISQLVAKMETAAIDMEYERAAQYRDQITALRRV.

Belongs to the UvrC family. Interacts with UvrB in an incision complex.

It localises to the cytoplasm. Functionally, the UvrABC repair system catalyzes the recognition and processing of DNA lesions. UvrC both incises the 5' and 3' sides of the lesion. The N-terminal half is responsible for the 3' incision and the C-terminal half is responsible for the 5' incision. The protein is UvrABC system protein C of Shewanella frigidimarina (strain NCIMB 400).